A 448-amino-acid chain; its full sequence is Ribonuclease J (448 aa).

Zn(2+) contacts are provided by histidine 81, histidine 83, aspartate 85, histidine 86, histidine 151, and aspartate 173. Position 383–387 (383–387 (HVSGH)) interacts with substrate. Histidine 409 lines the Zn(2+) pocket.

Belongs to the metallo-beta-lactamase superfamily. RNA-metabolizing metallo-beta-lactamase-like family. Archaeal RNase J subfamily. In terms of assembly, forms homodimers on heating to 60 degrees Celsius which may be the active form. Zn(2+) serves as cofactor.

It is found in the cytoplasm. Inhibited by imidazole. Functionally, a 5'-3' exoribonuclease with a strong reference for 5'-monophosphorylated RNA and no endoribonuclease activty. Also has robust 5'-'3 nuclease activity on single-stranded DNA (exodeoxyribonuclease, exoDNase). May be involved in RNA degradation. This chain is Ribonuclease J, found in Methanocaldococcus jannaschii (strain ATCC 43067 / DSM 2661 / JAL-1 / JCM 10045 / NBRC 100440) (Methanococcus jannaschii).